We begin with the raw amino-acid sequence, 558 residues long: Dihydroxy-acid dehydratase (558 aa).

A Mg(2+)-binding site is contributed by D78. Residue C119 participates in [2Fe-2S] cluster binding. Mg(2+) contacts are provided by D120 and K121. Position 121 is an N6-carboxylysine (K121). Position 192 (C192) interacts with [2Fe-2S] cluster. Mg(2+) is bound at residue E446. The active-site Proton acceptor is the S472.

Belongs to the IlvD/Edd family. In terms of assembly, homodimer. The cofactor is [2Fe-2S] cluster. Mg(2+) serves as cofactor.

The catalysed reaction is (2R)-2,3-dihydroxy-3-methylbutanoate = 3-methyl-2-oxobutanoate + H2O. It carries out the reaction (2R,3R)-2,3-dihydroxy-3-methylpentanoate = (S)-3-methyl-2-oxopentanoate + H2O. It participates in amino-acid biosynthesis; L-isoleucine biosynthesis; L-isoleucine from 2-oxobutanoate: step 3/4. It functions in the pathway amino-acid biosynthesis; L-valine biosynthesis; L-valine from pyruvate: step 3/4. Functions in the biosynthesis of branched-chain amino acids. Catalyzes the dehydration of (2R,3R)-2,3-dihydroxy-3-methylpentanoate (2,3-dihydroxy-3-methylvalerate) into 2-oxo-3-methylpentanoate (2-oxo-3-methylvalerate) and of (2R)-2,3-dihydroxy-3-methylbutanoate (2,3-dihydroxyisovalerate) into 2-oxo-3-methylbutanoate (2-oxoisovalerate), the penultimate precursor to L-isoleucine and L-valine, respectively. In Campylobacter jejuni subsp. doylei (strain ATCC BAA-1458 / RM4099 / 269.97), this protein is Dihydroxy-acid dehydratase.